The sequence spans 377 residues: MGIAGTFLFMIVIGAAIGAVTNHLAIQMLFRPYRPYYLFGKRVPFTPGLIPKRRDELAKQMGLMVTNHLLTPEGIKKRLLSDTVKNQALLFAEQFTQKMAASEMTVHEALAAAGILNPQEKTDAWIDRFTDEKLSELYRKYEHRAIKDWLPDELQEKLDEKVPLAADYILKRSTDYFESEEGKDRLGNMIDDFLNSRGMLGSMVQMFLGNSSLADRVLPELLKFLRNEETKKLLADLLSQEWGKLKSYTLYEADEKWNAKDLLFSMKKRALAALQTAPFFECRLGDIISRYEGEITGTYAPKLLDAALGSIAAHLEDVLKRLRLEEVVKEQVDQFPVERLEEMVLSISKREFKMITYLGGLLGGIIGAIQALFVILF.

Transmembrane regions (helical) follow at residues 1–21 and 357–377; these read MGIAGTFLFMIVIGAAIGAVT and YLGGLLGGIIGAIQALFVILF.

This sequence belongs to the UPF0754 family.

It localises to the cell membrane. The polypeptide is UPF0754 membrane protein RBAM_010020 (Bacillus velezensis (strain DSM 23117 / BGSC 10A6 / LMG 26770 / FZB42) (Bacillus amyloliquefaciens subsp. plantarum)).